The chain runs to 142 residues: DNA-directed RNA polymerases I and III subunit RPAC2 (142 aa).

The segment covering 1–11 (MTEDIEQKKTA) has biased composition (basic and acidic residues). Positions 1–45 (MTEDIEQKKTATEVTPQEPKHIQEEEEQDVDMTGDEEQEEEPDRE) are disordered. Phosphothreonine is present on residues Thr15 and Thr33. Over residues 24-42 (EEEEQDVDMTGDEEQEEEP) the composition is skewed to acidic residues. Lys134 participates in a covalent cross-link: Glycyl lysine isopeptide (Lys-Gly) (interchain with G-Cter in ubiquitin).

This sequence belongs to the archaeal Rpo11/eukaryotic RPB11/RPC19 RNA polymerase subunit family. Component of the RNA polymerase I (Pol I) and RNA polymerase III (Pol III) complexes. Component of the RNA polymerase I (Pol I) complex consisting of 14 subunits: RPA135, RPA190, RPC40, RPA14, RPB5, RPO26, RPA43, RPB8, RPA12, RPB10, RPC19, RPC10, RPA49 and RPA34. The complex is composed of a horseshoe-shaped core containing ten subunits (RPA135, RPA190, RPB5, RPO26, RPB8, RPB10, RPC10, RPA12, RPC19 and RPC40) where RPA135 and RPA190 form the DNA-binding cleft. Outside of the core, RPA14 and RPA43 form the stalk that mediates interactions with transcription initiation factors and newly synthesized RNA. Component of the RNA polymerase III (Pol III) complex consisting of 17 subunits. Directly interacts with the RPC40 subunit.

It is found in the nucleus. The protein resides in the nucleolus. DNA-dependent RNA polymerases catalyze the transcription of DNA into RNA using the four ribonucleoside triphosphates as substrates. Common core component of RNA polymerases I and III which synthesize ribosomal RNA precursors and small RNAs, such as 5S rRNA and tRNAs, respectively. The chain is DNA-directed RNA polymerases I and III subunit RPAC2 (RPC19) from Saccharomyces cerevisiae (strain ATCC 204508 / S288c) (Baker's yeast).